The primary structure comprises 864 residues: DNA mismatch repair protein MutS (864 aa).

613–620 is an ATP binding site; sequence GPNMGGKS.

The protein belongs to the DNA mismatch repair MutS family.

In terms of biological role, this protein is involved in the repair of mismatches in DNA. It is possible that it carries out the mismatch recognition step. This protein has a weak ATPase activity. The polypeptide is DNA mismatch repair protein MutS (Actinobacillus pleuropneumoniae serotype 3 (strain JL03)).